A 582-amino-acid chain; its full sequence is Semenogelin-2 (582 aa).

Residues 1–23 (MKSIILFVLSLLLILEKQAAVMG) form the signal peptide. Positions 24–59 (QKGGSKGQLPSGSSQFPHGQKGQHYFGQKDQQHTKS) are disordered. A compositionally biased stretch (polar residues) spans 31-40 (QLPSGSSQFP). 3 repeat units span residues 70-129 (HVDI…IVIH), 141-200 (NPSQ…QTEE), and 201-260 (LVVN…QDEL). The segment at 70–559 (HVDINDHDWT…SSESHNIVIT (490 aa)) is repeat-rich region. Disordered stretches follow at residues 132 to 160 (GGQAHHGTQNPSQDQGNSPSGKGLSSQCS), 173 to 194 (KEQASASGAQKGRTQGGSQSSY), 228 to 248 (EEHSSKLQTSLHPAHQDRLQH), and 269 to 582 (QTKN…PIST). Polar residues-rich tracts occupy residues 137 to 160 (HGTQNPSQDQGNSPSGKGLSSQCS) and 174 to 194 (EQASASGAQKGRTQGGSQSSY). Positions 261–500 (LVYNKNQHQT…QSSISFQIEK (240 aa)) are 4 X 60 AA tandem repeats, type I. Residue N272 is glycosylated (N-linked (GlcNAc...) asparagine). Residues 292-310 (RTEERQLHHGEKSVQKDVS) are compositionally biased toward basic and acidic residues. A compositionally biased stretch (polar residues) spans 325–334 (KSQNQVTIHS). Basic and acidic residues predominate over residues 335-345 (QDQEHGHKENK). Residues 372-397 (GSISIQTEEQIHGKSQNQVRIPSQAQ) are compositionally biased toward polar residues. Over residues 413–426 (TEERRLNSGEKDVQ) the composition is skewed to basic and acidic residues. Positions 445 to 455 (KSQNQVTIPSQ) are enriched in polar residues. A compositionally biased stretch (basic and acidic residues) spans 456 to 465 (DQEHGHKENK). Composition is skewed to polar residues over residues 482-496 (GKSTQKDVSQSSISF) and 506-532 (SQIQTPNPNQDQWSGQNAKGKSGQSAD). One copy of the 3-2 repeat lies at 501–559 (LVEGKSQIQTPNPNQDQWSGQNAKGKSGQSADSKQDLLSHEQKGRYKQESSESHNIVIT). Composition is skewed to basic and acidic residues over residues 533–552 (SKQDLLSHEQKGRYKQESSE) and 559–582 (TEHEVAQDDHLTQQYNEDRNPIST).

This sequence belongs to the semenogelin family. Interacts with SERPINA5. Semenogelin-2 is thought to form both the 71 kDa polypeptide and, in its glycosylated form, the 76 kDa polypeptide. In terms of tissue distribution, seminal vesicles, and to a much lesser extent, epididymis.

It localises to the secreted. Participates in the formation of a gel matrix (sperm coagulum) entrapping the accessory gland secretions and ejaculated spermatozoa. This is Semenogelin-2 (SEMG2) from Homo sapiens (Human).